A 1066-amino-acid polypeptide reads, in one-letter code: Thyrotropin-releasing hormone-degrading ectoenzyme (1066 aa).

Basic and acidic residues predominate over residues 1–14 (MALDGERGEQEEEK). The disordered stretch occupies residues 1-43 (MALDGERGEQEEEKKKKKKKKKRKKKEEEGAEKSSSPFAATMG). Residues 1–81 (MALDGERGEQ…ERHIAVHKRL (81 aa)) are Cytoplasmic-facing. Positions 15–25 (KKKKKKKKRKK) are enriched in basic residues. Residue Thr71 is modified to Phosphothreonine; by PKC. The helical; Signal-anchor for type II membrane protein transmembrane segment at 82-102 (VLAFAVSIVALLAVTMLAVLL) threads the bilayer. Over 103–1066 (SLRFDECGAS…FQWLGKAMRH (964 aa)) the chain is Extracellular. The tract at residues 117–177 (GTDGGLGGFP…SEEEQEQWQP (61 aa)) is disordered. A compositionally biased stretch (gly residues) spans 118-127 (TDGGLGGFPE). The N-linked (GlcNAc...) asparagine glycan is linked to Asn131. Positions 143–154 (HAGEESSQREIG) are enriched in basic and acidic residues. Residues Asn202, Asn217, Asn264, and Asn380 are each glycosylated (N-linked (GlcNAc...) asparagine). 446-450 (AAMEN) serves as a coordination point for substrate. His482 contributes to the Zn(2+) binding site. Residue Glu483 is the Proton acceptor of the active site. Residues His486 and Glu505 each contribute to the Zn(2+) site. 7 N-linked (GlcNAc...) asparagine glycosylation sites follow: Asn647, Asn676, Asn691, Asn705, Asn726, Asn842, and Asn948.

The protein belongs to the peptidase M1 family. As to quaternary structure, homodimer; disulfide-linked. It depends on Zn(2+) as a cofactor. In terms of tissue distribution, predominantly expressed in brain and pituitary. Lower levels in lung and liver.

The protein localises to the membrane. It catalyses the reaction Release of the N-terminal pyroglutamyl group from pGlu-|-His-Xaa tripeptides and pGlu-|-His-Xaa-Gly tetrapeptides.. Functionally, specific inactivation of TRH after its release. The sequence is that of Thyrotropin-releasing hormone-degrading ectoenzyme (Trhde) from Rattus norvegicus (Rat).